A 184-amino-acid chain; its full sequence is Ribosome-recycling factor (184 aa).

The protein belongs to the RRF family.

The protein resides in the cytoplasm. Its function is as follows. Responsible for the release of ribosomes from messenger RNA at the termination of protein biosynthesis. May increase the efficiency of translation by recycling ribosomes from one round of translation to another. The protein is Ribosome-recycling factor of Acinetobacter baumannii (strain AB307-0294).